Here is a 604-residue protein sequence, read N- to C-terminus: MAATAVVAPQAEASESWYLALLGFAEHFRTSSPPKIRLCVHCLQAVFQFKPSQRIEARTHLQLGSVLYHHTKNSELARQHLEKAWLISQQIPQFEDVKFEAASLLSELYCQENSVDAAKPLLRKAIQISQQTPYWHCRLLFQLAQLHTLEKDLVSACDLLGVGAEYARVVGSEYTRALFLLSKGMLLLMERKLQEVHPLLTLCGQIVENWQGNPIQKESLRVFFLVLQVTHYLDAGQVKSVKPCLKQLQQCIQTISTLHDDEILPSNPADLFHWLPKEHMCVLVYLVTVMHSMQAGYLEKAQKYTDKALMQLEKLKMLDSSPILSSFQVILLEHIIMCRLVTGHKATALQEISQVCQLCQQSPRLFSNHAAQLHTLLGLYCISVNCMDNAEAQFTTALRLTTHQELWTFIVTNLASVYIREGNRHQELYSLLERINPDHNFPVSSHCLRAAAFYIRGLFSFFQGRYNEAKRFLRETLKMSNAEDLNRLTACSLVLLGHIFYVLGNHRESNNMVVPAMQLASKIPDMSVQLWSSALLRDLNKACGNNIDAHEAAQMHQNFSQQLLQDHIEACSLPEHNLITWTDGSPPVQFQAQNGPTTSLASLL.

4 TPR repeats span residues 99–132 (FEAA…SQQT), 371–404 (AQLH…TTHQ), 450–483 (AAAF…SNAE), and 490–523 (ACSL…ASKI).

Belongs to the SCC4/mau-2 family. Interacts with nipbl to form the cohesin loading complex.

The protein resides in the nucleus. Its subcellular location is the nucleoplasm. Plays an important role in the loading of the cohesin complex on to DNA. Plays a role in sister chromatid cohesion and normal progression through prometaphase. This chain is MAU2 chromatid cohesion factor homolog (mau2), found in Xenopus tropicalis (Western clawed frog).